The chain runs to 415 residues: Cyclin-A2 (415 aa).

It belongs to the cyclin family. Cyclin AB subfamily. Interacts with the CDK1 and CDK2 protein kinases to form serine/threonine kinase holoenzyme complexes. As to expression, ubiquitous.

The protein resides in the nucleus. It localises to the cytoplasm. Cyclin which controls both the G1/S and the G2/M transition phases of the cell cycle. Functions through the formation of specific serine/threonine kinase holoenzyme complexes with the cyclin-dependent protein kinases CDK1 and CDK2. The cyclin subunit confers the substrate specificity of these complexes and differentially interacts with and activates CDK1 and CDK2 throughout the cell cycle. The polypeptide is Cyclin-A2 (ccna2) (Xenopus laevis (African clawed frog)).